The chain runs to 175 residues: Lactobacillus up-regulated protein (175 aa).

The first 18 residues, Met1–Ala18, serve as a signal peptide directing secretion. An N-linked (GlcNAc...) asparagine glycan is attached at Asn59.

In Emericella nidulans (strain FGSC A4 / ATCC 38163 / CBS 112.46 / NRRL 194 / M139) (Aspergillus nidulans), this protein is Lactobacillus up-regulated protein (lbuA).